A 92-amino-acid polypeptide reads, in one-letter code: LYR motif-containing protein 4 homolog (92 aa).

Positions 48 to 68 (AEIDRQMAEGQQNLELIRRQV) form a coiled coil.

This sequence belongs to the complex I LYR family. Component of the mitochondrial core iron-sulfur cluster (ISC) assembly complex at least composed of the cysteine desulfurase Nfs1, the scaffold protein IscU, the accessory protein bcn92/Isd11/Lyrm4, and probably fh/frataxin. Interacts with Nfs1.

It localises to the mitochondrion. Functionally, stabilizing factor of the core iron-sulfur cluster (ISC) assembly complex that regulates the stability and cysteine desulfurase activity of Nfs1 and participates in the [2Fe-2S] clusters assembly on the scaffolding protein IscU. The protein is LYR motif-containing protein 4 homolog of Drosophila melanogaster (Fruit fly).